A 347-amino-acid chain; its full sequence is MNPIIFFMIMLTIILGTTIVMTSSHWLTVWMGFEMNMLAIIPMLMKNHHPRSTEAATKYFLTQATASMLLLLAITINLMSSGQWTVTNMINPTSSIILTIALAMKLGLAPFHFWVPEVTQGTPLSSGLILLTWQKLAPLSILLTMSPIINLDLLLMMGLLSVMIGGWGGLNQTQLRKIMAYSSIAHMGWMVTILIYNPTLTMLNLTIYIMMTLTMFMLLITTSTTTTLSLSHAWNKMPLITTMMLTTLLSMGGLPPLTGFMPKWMILQELTKNNSIILPTFMAITALLNLYFYMRLTYSTSLTMFPTTNATKIKWPFMTTKQMTYLSPLMVISTMTLPLTPMMMILH.

10 consecutive transmembrane segments (helical) span residues 1-21 (MNPI…TIVM), 25-45 (HWLT…PMLM), 59-79 (YFLT…INLM), 96-116 (IILT…FWVP), 148-168 (IINL…GGWG), 178-198 (IMAY…IYNP), 200-220 (LTML…MLLI), 237-257 (MPLI…LPPL), 274-294 (NSII…YFYM), and 326-346 (LSPL…MMIL).

It belongs to the complex I subunit 2 family. Core subunit of respiratory chain NADH dehydrogenase (Complex I) which is composed of 45 different subunits. Interacts with TMEM242.

The protein localises to the mitochondrion inner membrane. It catalyses the reaction a ubiquinone + NADH + 5 H(+)(in) = a ubiquinol + NAD(+) + 4 H(+)(out). Core subunit of the mitochondrial membrane respiratory chain NADH dehydrogenase (Complex I) which catalyzes electron transfer from NADH through the respiratory chain, using ubiquinone as an electron acceptor. Essential for the catalytic activity and assembly of complex I. The protein is NADH-ubiquinone oxidoreductase chain 2 of Gardnerycteris crenulata (Striped hairy-nosed bat).